We begin with the raw amino-acid sequence, 130 residues long: Small ribosomal subunit protein uS9 (130 aa).

The protein belongs to the universal ribosomal protein uS9 family.

In Thioalkalivibrio sulfidiphilus (strain HL-EbGR7), this protein is Small ribosomal subunit protein uS9.